Reading from the N-terminus, the 117-residue chain is Large ribosomal subunit protein bL19 (117 aa).

Belongs to the bacterial ribosomal protein bL19 family.

Its function is as follows. This protein is located at the 30S-50S ribosomal subunit interface and may play a role in the structure and function of the aminoacyl-tRNA binding site. The polypeptide is Large ribosomal subunit protein bL19 (Shewanella denitrificans (strain OS217 / ATCC BAA-1090 / DSM 15013)).